The sequence spans 96 residues: Phosphoribosyl-ATP pyrophosphatase (96 aa).

The protein belongs to the PRA-PH family.

Its subcellular location is the cytoplasm. The catalysed reaction is 1-(5-phospho-beta-D-ribosyl)-ATP + H2O = 1-(5-phospho-beta-D-ribosyl)-5'-AMP + diphosphate + H(+). Its pathway is amino-acid biosynthesis; L-histidine biosynthesis; L-histidine from 5-phospho-alpha-D-ribose 1-diphosphate: step 2/9. The protein is Phosphoribosyl-ATP pyrophosphatase of Methanococcus maripaludis (strain C6 / ATCC BAA-1332).